We begin with the raw amino-acid sequence, 629 residues long: tRNA uridine 5-carboxymethylaminomethyl modification enzyme MnmG (629 aa).

FAD contacts are provided by residues 13-18 (GGGHAG), valine 125, and serine 180. 273–287 (GPRYCPSIEDKVMRF) contacts NAD(+). Residue glutamine 370 participates in FAD binding.

The protein belongs to the MnmG family. In terms of assembly, homodimer. Heterotetramer of two MnmE and two MnmG subunits. Requires FAD as cofactor.

It localises to the cytoplasm. In terms of biological role, NAD-binding protein involved in the addition of a carboxymethylaminomethyl (cmnm) group at the wobble position (U34) of certain tRNAs, forming tRNA-cmnm(5)s(2)U34. In Salmonella paratyphi C (strain RKS4594), this protein is tRNA uridine 5-carboxymethylaminomethyl modification enzyme MnmG.